A 447-amino-acid chain; its full sequence is Tubulin beta-2 chain (447 aa).

8 residues coordinate GTP: glutamine 11, glutamate 69, serine 138, glycine 142, threonine 143, glycine 144, asparagine 204, and asparagine 226. Glutamate 69 lines the Mg(2+) pocket. The interval 427-447 (DASISEGEEEYEEEQQLENEE) is disordered. Over residues 432–447 (EGEEEYEEEQQLENEE) the composition is skewed to acidic residues.

The protein belongs to the tubulin family. In terms of assembly, dimer of alpha and beta chains. A typical microtubule is a hollow water-filled tube with an outer diameter of 25 nm and an inner diameter of 15 nM. Alpha-beta heterodimers associate head-to-tail to form protofilaments running lengthwise along the microtubule wall with the beta-tubulin subunit facing the microtubule plus end conferring a structural polarity. Microtubules usually have 13 protofilaments but different protofilament numbers can be found in some organisms and specialized cells. Mg(2+) serves as cofactor.

The protein resides in the cytoplasm. Its subcellular location is the cytoskeleton. In terms of biological role, tubulin is the major constituent of microtubules, a cylinder consisting of laterally associated linear protofilaments composed of alpha- and beta-tubulin heterodimers. Microtubules grow by the addition of GTP-tubulin dimers to the microtubule end, where a stabilizing cap forms. Below the cap, tubulin dimers are in GDP-bound state, owing to GTPase activity of alpha-tubulin. The polypeptide is Tubulin beta-2 chain (TUB2) (Erysiphe pisi (Pea powdery mildew)).